The following is a 185-amino-acid chain: Ribosome-recycling factor (185 aa).

Belongs to the RRF family.

The protein resides in the cytoplasm. In terms of biological role, responsible for the release of ribosomes from messenger RNA at the termination of protein biosynthesis. May increase the efficiency of translation by recycling ribosomes from one round of translation to another. The sequence is that of Ribosome-recycling factor from Thermotoga petrophila (strain ATCC BAA-488 / DSM 13995 / JCM 10881 / RKU-1).